The following is a 467-amino-acid chain: Spermatogenesis- and oogenesis-specific basic helix-loop-helix-containing protein 2 (467 aa).

The bHLH domain maps to 200–251 (QASFLHSTKEKLRRERIKSCCEQLRTLLPYVKGRKSDVASVIEATVDYVKQV). The span at 443 to 453 (ASASDHQASQP) shows a compositional bias: low complexity. The segment at 443 to 467 (ASASDHQASQPPALPSPQPHDSSYF) is disordered.

Forms both hetero- and homodimers with SOHLH1. In terms of tissue distribution, preferentially expressed in the adult ovary and testis. Expressed in the majority of spermatogonia in adult animals, but not in the most undifferentiated spermatogonial population.

Its subcellular location is the nucleus. It localises to the cytoplasm. Transcription regulator of both male and female germline differentiation. Suppresses genes involved in spermatogonial stem cells maintenance, and induces genes important for spermatogonial differentiation. Coordinates oocyte differentiation without affecting meiosis I. This is Spermatogenesis- and oogenesis-specific basic helix-loop-helix-containing protein 2 (Sohlh2) from Mus musculus (Mouse).